Here is a 132-residue protein sequence, read N- to C-terminus: Thioredoxin H4-2 (132 aa).

A Thioredoxin domain is found at 18–130 (DFKGGNVHVI…LEKKVQALAD (113 aa)). Catalysis depends on nucleophile residues Cys56 and Cys59. The cysteines at positions 56 and 59 are disulfide-linked.

It belongs to the thioredoxin family. Plant H-type subfamily.

It localises to the cytoplasm. In terms of biological role, probable thiol-disulfide oxidoreductase that may be involved in the redox regulation of a number of cytosolic enzymes. This Oryza sativa subsp. japonica (Rice) protein is Thioredoxin H4-2.